Here is a 287-residue protein sequence, read N- to C-terminus: Xyloglucan endotransglucosylase protein 1 (287 aa).

The N-terminal stretch at 1 to 28 (MAFMSFINGFSTLFLVALLASSMMAAKG) is a signal peptide. The region spanning 29–219 (GNFYQDFDVT…WTKAPFTAYY (191 aa)) is the GH16 domain. The active-site Nucleophile is the Glu105. The active-site Proton donor is Glu109. Glu109 provides a ligand contact to xyloglucan. A glycan (N-linked (GlcNAc...) asparagine) is linked at Asn113. Xyloglucan-binding positions include 122-124 (HTN), 132-134 (NRE), 198-199 (DW), and Gly203. 2 disulfide bridges follow: Cys227–Cys231 and Cys266–Cys280. Arg271 contacts xyloglucan.

It belongs to the glycosyl hydrolase 16 family. XTH group 2 subfamily. Contains at least one intrachain disulfide bond essential for its enzymatic activity. Expressed in fruit pulp. Expressed in leaves, flowers, calyces, stems and fruits. Highest expression in leaves and lowest in fruits.

It is found in the secreted. It localises to the cell wall. The protein localises to the extracellular space. The protein resides in the apoplast. It catalyses the reaction breaks a beta-(1-&gt;4) bond in the backbone of a xyloglucan and transfers the xyloglucanyl segment on to O-4 of the non-reducing terminal glucose residue of an acceptor, which can be a xyloglucan or an oligosaccharide of xyloglucan.. Functionally, catalyzes xyloglucan endotransglycosylation (XET). Cleaves and religates xyloglucan polymers. Does not catalyze xyloglucan endohydrolysis (XEH). Overexpression in Arabidopsis transgenic plants results in elevated tolerance to abiotic stress, such as salt, ABA (abscisic acid) and drought stresses, and in the production of wider leaves. Overexpression in transgenic tomato plants slows down fruit ripening and softening, and the plants produce larger fruits. Both transgenic plants have larger and more irregular cells. Moreover, the fruits of the transgenic tomato have higher density of cell wall and intercellular spaces. May provide cells with more strength and thickness to maintain structural integrity. Probably involved in cell wall assembly and synthesis in fast growing tissues and in the maintenance of firmness in mature fruits. This is Xyloglucan endotransglucosylase protein 1 from Diospyros kaki (Kaki persimmon).